The primary structure comprises 865 residues: Leucine--tRNA ligase (865 aa).

Residues 58–68 carry the 'HIGH' region motif; that stretch reads PYPSGNLHMGH. The short motif at 629-633 is the 'KMSKS' region element; that stretch reads KMSKS. Lys632 serves as a coordination point for ATP.

This sequence belongs to the class-I aminoacyl-tRNA synthetase family.

The protein resides in the cytoplasm. It catalyses the reaction tRNA(Leu) + L-leucine + ATP = L-leucyl-tRNA(Leu) + AMP + diphosphate. The polypeptide is Leucine--tRNA ligase (Synechococcus elongatus (strain ATCC 33912 / PCC 7942 / FACHB-805) (Anacystis nidulans R2)).